We begin with the raw amino-acid sequence, 172 residues long: Large ribosomal subunit protein uL10 (172 aa).

It belongs to the universal ribosomal protein uL10 family. In terms of assembly, part of the ribosomal stalk of the 50S ribosomal subunit. The N-terminus interacts with L11 and the large rRNA to form the base of the stalk. The C-terminus forms an elongated spine to which L12 dimers bind in a sequential fashion forming a multimeric L10(L12)X complex.

In terms of biological role, forms part of the ribosomal stalk, playing a central role in the interaction of the ribosome with GTP-bound translation factors. In Bartonella bacilliformis (strain ATCC 35685 / KC583 / Herrer 020/F12,63), this protein is Large ribosomal subunit protein uL10.